The chain runs to 535 residues: CTP synthase (535 aa).

Positions 1-266 are amidoligase domain; the sequence is MKTKFIFITG…DEQVVEKLNI (266 aa). S14 is a binding site for CTP. Residue S14 participates in UTP binding. ATP-binding positions include 15–20 and D72; that span reads SIGKGL. Mg(2+) is bound by residues D72 and E140. CTP-binding positions include 147–149, 187–192, and K223; these read DIE and KTKPTQ. Residues 187-192 and K223 contribute to the UTP site; that span reads KTKPTQ. Positions 292-534 constitute a Glutamine amidotransferase type-1 domain; the sequence is RIAIVGKYVN…IGASLTHRNQ (243 aa). G354 is a binding site for L-glutamine. The active-site Nucleophile; for glutamine hydrolysis is C381. L-glutamine is bound by residues 382-385, E405, and R462; that span reads LGMQ. Active-site residues include H507 and E509.

Belongs to the CTP synthase family. In terms of assembly, homotetramer.

It catalyses the reaction UTP + L-glutamine + ATP + H2O = CTP + L-glutamate + ADP + phosphate + 2 H(+). The catalysed reaction is L-glutamine + H2O = L-glutamate + NH4(+). It carries out the reaction UTP + NH4(+) + ATP = CTP + ADP + phosphate + 2 H(+). The protein operates within pyrimidine metabolism; CTP biosynthesis via de novo pathway; CTP from UDP: step 2/2. Its activity is regulated as follows. Allosterically activated by GTP, when glutamine is the substrate; GTP has no effect on the reaction when ammonia is the substrate. The allosteric effector GTP functions by stabilizing the protein conformation that binds the tetrahedral intermediate(s) formed during glutamine hydrolysis. Inhibited by the product CTP, via allosteric rather than competitive inhibition. Catalyzes the ATP-dependent amination of UTP to CTP with either L-glutamine or ammonia as the source of nitrogen. Regulates intracellular CTP levels through interactions with the four ribonucleotide triphosphates. This is CTP synthase from Trichlorobacter lovleyi (strain ATCC BAA-1151 / DSM 17278 / SZ) (Geobacter lovleyi).